We begin with the raw amino-acid sequence, 362 residues long: Ribosome-binding ATPase YchF (362 aa).

An OBG-type G domain is found at 3–255 (FKCGIIGLPN…MNEDEQKYFM (253 aa)). 12-17 (NVGKST) provides a ligand contact to ATP. Mg(2+) contacts are provided by Ser-16 and Thr-36. Positions 277–360 (NLITFFTAGI…QDGDIINFLF (84 aa)) constitute a TGS domain.

It belongs to the TRAFAC class OBG-HflX-like GTPase superfamily. OBG GTPase family. YchF/OLA1 subfamily. Mg(2+) serves as cofactor.

ATPase that binds to both the 70S ribosome and the 50S ribosomal subunit in a nucleotide-independent manner. This Buchnera aphidicola subsp. Schizaphis graminum (strain Sg) protein is Ribosome-binding ATPase YchF.